The chain runs to 488 residues: Probable cytochrome P450 6u1 (488 aa).

C430 serves as a coordination point for heme.

This sequence belongs to the cytochrome P450 family. The cofactor is heme.

It localises to the endoplasmic reticulum membrane. Its subcellular location is the microsome membrane. Functionally, may be involved in the metabolism of insect hormones and in the breakdown of synthetic insecticides. In Drosophila melanogaster (Fruit fly), this protein is Probable cytochrome P450 6u1 (Cyp6u1).